Reading from the N-terminus, the 393-residue chain is NAD(P)H-quinone oxidoreductase subunit H, chloroplastic (393 aa).

This sequence belongs to the complex I 49 kDa subunit family. As to quaternary structure, NDH is composed of at least 16 different subunits, 5 of which are encoded in the nucleus.

The protein resides in the plastid. It is found in the chloroplast thylakoid membrane. It carries out the reaction a plastoquinone + NADH + (n+1) H(+)(in) = a plastoquinol + NAD(+) + n H(+)(out). The catalysed reaction is a plastoquinone + NADPH + (n+1) H(+)(in) = a plastoquinol + NADP(+) + n H(+)(out). Functionally, NDH shuttles electrons from NAD(P)H:plastoquinone, via FMN and iron-sulfur (Fe-S) centers, to quinones in the photosynthetic chain and possibly in a chloroplast respiratory chain. The immediate electron acceptor for the enzyme in this species is believed to be plastoquinone. Couples the redox reaction to proton translocation, and thus conserves the redox energy in a proton gradient. The protein is NAD(P)H-quinone oxidoreductase subunit H, chloroplastic of Lotus japonicus (Lotus corniculatus var. japonicus).